Consider the following 1382-residue polypeptide: MEDIFNFFDKPKDPLHFSSIKISISSPDKIRERSFGEVKKPETINYRTFKPERDGLFCAKIFGPTKDYECNCGKYKRMKHRGIVCEKCGVEVIPSKVRRERLGHIDLATPVAHIWFLKSLPSRIGNLMDITLKDLEKVLYFEAYVVTDPKDTGLAFGTVFSEDQYQKALEEYSYGFEAGMGAAAIRTCLTSMDLDQLSEQLRIEMQEATSEAKRKKTAKRLKVIEAFKNSGNKPEWMILECIPVLPPELRPLVPLDGGRFATSDLNDLYRRVINRNNRLKRLMELQAPEVIIRNEKRMLQEAVDALFDNGRRGRAIAGPNKRPLKSLSDMLKGKSGRFRQNLLGKRVDYSGRSVIVVGPELRLHQCGLPKKMALELFKPFIYNKLEERGFVTTIKSAKKMVEKEKPEVWDVLEEVIKEHPVLLNRAPTLHRLGIQAFEPVLIEGKAIQLHPLVCTAFNADFDGDQMAVHLPLSVESQVEARVLMMSTNNILSPAHGKPIIVPSQDMVLGIYYMTRDKHFALGEGKIFASPDEVNIAWDAGEIHLQARIKVRMKNLVSDEKPTLIETTTGRVLLRDILPDAVPYATINKVMTKKELSNLVDVCYRLAGNKETVILADKLKAIGFRYAAKAGISISINDMVIPEGKPAIINRATEEVQEIQNQYTEGLITDGERYNKVIDIWAKSTEDIAKEMLDNLSRDTILDPEGKEVKVPSFNAIHMMADSGARGSAQQIRQLAGMRGLMAKPSGEIIETPITANFREGLTVLQYFISTHGARKGLADTALKTANSGYLTRRLVDVAQDAIITEADCGTIDGLTVSSLTEGGEVIEHIGDRILGRVALDDILDPVTGDVLVPANEEIDETLVAKIEAAGLEKVKIRSVLTCESRRGICAKCYGRDLARGHLVNRGEAVGVIAAQSIGEPGTQLTMRTFHIGGTASRRAEQTALEARNEGFAKFININYVTNSEGHHIVMNRNGELAIVDETGREREKYGVVYGAKIKVSPQEKVAQGQSVAEWDPYTMPILTEVAGRVKFGDVIEGVTMEEQVDEVTGLSRKVIIETRDTDKRPRITIKDESGKTAKIGENLLARYYLPVGSNINVLEEIEVNAGDVIAKIPRETTKTKDITGGLPRVAELFEARKPKDFAVITEIDGVVAFGKDAKGKRKVLVTPELGEPKEYLIPKGKHISVHEGDHVRAGEALMDGSSNPHDILRVLGQKELAKYLVDEVQEVYRLQGVKINDKHIETIVRQMLRRVRVKDVGDTNLLIDDQIERWVFEEENEKAMDKGGRPATAESLLLGITKASLSTESFISAASFQETTKVLTQASIEGKVDSLRGLKENVIMGRLIPAGTGLALYRNLRMVAEEPVIIPEPAEPEDEEIYEEEA.

C70, C72, C85, and C88 together coordinate Zn(2+). Positions 460, 462, and 464 each coordinate Mg(2+). Zn(2+)-binding residues include C808, C882, C889, and C892.

This sequence belongs to the RNA polymerase beta' chain family. In terms of assembly, the RNAP catalytic core consists of 2 alpha, 1 beta, 1 beta' and 1 omega subunit. When a sigma factor is associated with the core the holoenzyme is formed, which can initiate transcription. It depends on Mg(2+) as a cofactor. The cofactor is Zn(2+).

It catalyses the reaction RNA(n) + a ribonucleoside 5'-triphosphate = RNA(n+1) + diphosphate. Functionally, DNA-dependent RNA polymerase catalyzes the transcription of DNA into RNA using the four ribonucleoside triphosphates as substrates. This Citrifermentans bemidjiense (strain ATCC BAA-1014 / DSM 16622 / JCM 12645 / Bem) (Geobacter bemidjiensis) protein is DNA-directed RNA polymerase subunit beta'.